An 824-amino-acid chain; its full sequence is Molybdenum cofactor sulfurase (824 aa).

At K274 the chain carries N6-(pyridoxal phosphate)lysine. The active site involves C433. In terms of domain architecture, MOSC spans 655–822; that stretch reads CSSSKYRSCT…LQVGQQVYPS (168 aa).

The protein belongs to the class-V pyridoxal-phosphate-dependent aminotransferase family. MOCOS subfamily. Requires pyridoxal 5'-phosphate as cofactor.

The enzyme catalyses Mo-molybdopterin + L-cysteine + AH2 = thio-Mo-molybdopterin + L-alanine + A + H2O. The protein operates within cofactor biosynthesis; molybdopterin biosynthesis. Sulfurates the molybdenum cofactor. Sulfation of molybdenum is essential for xanthine dehydrogenase (XDH) and aldehyde oxidase (ADO) enzymes in which molybdenum cofactor is liganded by 1 oxygen and 1 sulfur atom in active form. The protein is Molybdenum cofactor sulfurase (MCSU3) of Oryza sativa subsp. japonica (Rice).